The chain runs to 449 residues: Histidinol dehydrogenase (449 aa).

Residues Tyr136, Gln204, and Asn232 each contribute to the NAD(+) site. Substrate-binding residues include Thr255, Gln277, and His280. The Zn(2+) site is built by Gln277 and His280. Active-site proton acceptor residues include Glu346 and His347. 4 residues coordinate substrate: His347, Asp380, Glu434, and His439. Asp380 lines the Zn(2+) pocket. His439 is a Zn(2+) binding site.

Belongs to the histidinol dehydrogenase family. It depends on Zn(2+) as a cofactor.

The catalysed reaction is L-histidinol + 2 NAD(+) + H2O = L-histidine + 2 NADH + 3 H(+). It participates in amino-acid biosynthesis; L-histidine biosynthesis; L-histidine from 5-phospho-alpha-D-ribose 1-diphosphate: step 9/9. In terms of biological role, catalyzes the sequential NAD-dependent oxidations of L-histidinol to L-histidinaldehyde and then to L-histidine. This is Histidinol dehydrogenase (hisD) from Mycobacterium leprae (strain TN).